The chain runs to 453 residues: Enolase (453 aa).

Q163 contacts (2R)-2-phosphoglycerate. E205 serves as the catalytic Proton donor. Residues D258, E308, and D335 each contribute to the Mg(2+) site. The (2R)-2-phosphoglycerate site is built by K360, R389, S390, and K411. Residue K360 is the Proton acceptor of the active site.

The protein belongs to the enolase family. It depends on Mg(2+) as a cofactor.

It localises to the cytoplasm. Its subcellular location is the secreted. It is found in the cell surface. The enzyme catalyses (2R)-2-phosphoglycerate = phosphoenolpyruvate + H2O. It functions in the pathway carbohydrate degradation; glycolysis; pyruvate from D-glyceraldehyde 3-phosphate: step 4/5. Its function is as follows. Catalyzes the reversible conversion of 2-phosphoglycerate (2-PG) into phosphoenolpyruvate (PEP). It is essential for the degradation of carbohydrates via glycolysis. The chain is Enolase from Mesoplasma florum (strain ATCC 33453 / NBRC 100688 / NCTC 11704 / L1) (Acholeplasma florum).